The sequence spans 197 residues: Transmembrane 4 L6 family member 5 (197 aa).

The Cytoplasmic segment spans residues 1–9 (MCTGKCARC). A helical membrane pass occupies residues 10 to 30 (VGLSLITLCLVCIVANALLLV). The Extracellular segment spans residues 31–46 (PNGETSWTNTNHLSLQ). The chain crosses the membrane as a helical span at residues 47–67 (VWLMGGFIGGGLMVLCPGIAA). Residues 68 to 90 (VRAGGKGCCGAGCCGNRCRMLRS) lie on the Cytoplasmic side of the membrane. A helical membrane pass occupies residues 91-111 (VFSSAFGVLGAIYCLSVSGAG). An interaction with MTOR and CASTOR1 region spans residues 91–197 (VFSSAFGVLG…DCRKKQDTPH (107 aa)). Over 112-157 (LRNGPRCLMNGEWGYHFEDTAGAYLLNRTLWDRCEAPPRVVPWNVT) the chain is Extracellular. 124 to 129 (WGYHFE) is an L-arginine binding site. 2 N-linked (GlcNAc...) asparagine glycosylation sites follow: Asn138 and Asn155. The chain crosses the membrane as a helical span at residues 158–178 (LFSLLVAASCLEIVLCGIQLV). Topologically, residues 179 to 197 (NATIGVFCGDCRKKQDTPH) are cytoplasmic.

Belongs to the L6 tetraspanin family. As to quaternary structure, interacts with MTOR; the interaction is positively regulated by arginine and is negatively regulated by leucine. Interacts with SLC38A9. Interacts with SLC7A1; the interaction is negatively regulated by arginine. Interacts with CASTOR1; the interaction is positively regulated by leucine and is negatively regulated by arginine. Intestine. Overexpressed in pancreatic cancers.

The protein resides in the lysosome membrane. It localises to the cell membrane. Functionally, acts as a lysosomal membrane arginine sensor. Forms a complex with MTOR and SLC38A9 on lysosomal membranes in an arginine-regulated manner, leading to arginine efflux which enables the activation of mTORC1 which subsequently leads to RPS6KB1 and EIF4EBP1 phosphorylations. Facilitates cell cycle G1/S phase progression and the translocation of the CDK4-CCND1 complex into the nucleus. CDKN1B and RHOA/ROCK signaling activity are involved in TM4SF5-mediated acceleration of G1/S phase progression. The polypeptide is Transmembrane 4 L6 family member 5 (TM4SF5) (Homo sapiens (Human)).